Reading from the N-terminus, the 936-residue chain is Lon protease homolog, mitochondrial (936 aa).

A mitochondrion-targeting transit peptide spans 1-40; sequence MYATRAIARRLERHAARCKGAHVARAVRGARARTTSAPRA. The disordered stretch occupies residues 65-95; that stretch reads AFVSSVDGDGSTGSTGSSSSSSSSAFGDSAS. Positions 66–95 are enriched in low complexity; sequence FVSSVDGDGSTGSTGSSSSSSSSAFGDSAS. One can recognise a Lon N-terminal domain in the interval 112-352; sequence VLAVPLPRRP…ATLELLKKEV (241 aa). 507–514 is an ATP binding site; the sequence is GPPGVGKT. The Lon proteolytic domain maps to 748 to 932; that stretch reads VTPPGVVTGL…DEVYRQALDW (185 aa). Catalysis depends on residues S838 and K881.

This sequence belongs to the peptidase S16 family. In terms of assembly, homohexamer or homoheptamer. Organized in a ring with a central cavity.

The protein localises to the mitochondrion matrix. It catalyses the reaction Hydrolysis of proteins in presence of ATP.. In terms of biological role, ATP-dependent serine protease that mediates the selective degradation of misfolded, unassembled or oxidatively damaged polypeptides as well as certain short-lived regulatory proteins in the mitochondrial matrix. May also have a chaperone function in the assembly of inner membrane protein complexes. Participates in the regulation of mitochondrial gene expression and in the maintenance of the integrity of the mitochondrial genome. Binds to mitochondrial DNA in a site-specific manner. The chain is Lon protease homolog, mitochondrial from Ostreococcus lucimarinus (strain CCE9901).